We begin with the raw amino-acid sequence, 341 residues long: Ketol-acid reductoisomerase (NADP(+)) (341 aa).

The KARI N-terminal Rossmann domain occupies 2–181 (AKVYYNGDAN…GATRAGVLET (180 aa)). Residues 25–28 (YGSQ), arginine 48, serine 52, and 82–85 (DEKQ) each bind NADP(+). Residue histidine 107 is part of the active site. Residue glycine 133 coordinates NADP(+). The KARI C-terminal knotted domain maps to 182 to 327 (TFKEETETDL…RELRSMMPFV (146 aa)). Mg(2+) is bound by residues aspartate 190, glutamate 194, glutamate 226, and glutamate 230. Serine 251 serves as a coordination point for substrate.

This sequence belongs to the ketol-acid reductoisomerase family. Requires Mg(2+) as cofactor.

It catalyses the reaction (2R)-2,3-dihydroxy-3-methylbutanoate + NADP(+) = (2S)-2-acetolactate + NADPH + H(+). It carries out the reaction (2R,3R)-2,3-dihydroxy-3-methylpentanoate + NADP(+) = (S)-2-ethyl-2-hydroxy-3-oxobutanoate + NADPH + H(+). The protein operates within amino-acid biosynthesis; L-isoleucine biosynthesis; L-isoleucine from 2-oxobutanoate: step 2/4. Its pathway is amino-acid biosynthesis; L-valine biosynthesis; L-valine from pyruvate: step 2/4. Its function is as follows. Involved in the biosynthesis of branched-chain amino acids (BCAA). Catalyzes an alkyl-migration followed by a ketol-acid reduction of (S)-2-acetolactate (S2AL) to yield (R)-2,3-dihydroxy-isovalerate. In the isomerase reaction, S2AL is rearranged via a Mg-dependent methyl migration to produce 3-hydroxy-3-methyl-2-ketobutyrate (HMKB). In the reductase reaction, this 2-ketoacid undergoes a metal-dependent reduction by NADPH to yield (R)-2,3-dihydroxy-isovalerate. The protein is Ketol-acid reductoisomerase (NADP(+)) of Geobacillus sp. (strain WCH70).